A 673-amino-acid polypeptide reads, in one-letter code: UvrABC system protein B (673 aa).

In terms of domain architecture, Helicase ATP-binding spans 25 to 413; the sequence is EGIESGLAHQ…GSDIAEQVVR (389 aa). 38-45 lines the ATP pocket; the sequence is GVTGSGKT. The Beta-hairpin motif lies at 91–114; sequence YYDYYQPEAYVPTTDTFIEKDASV. Positions 430–583 constitute a Helicase C-terminal domain; that stretch reads QVDDLLSEIN…QHQYNLDNNI (154 aa). The region spanning 634 to 669 is the UVR domain; it reads DTKIVELEKLMQGHAQNLEFEQAAAMRDKIAKLRIQ.

This sequence belongs to the UvrB family. In terms of assembly, forms a heterotetramer with UvrA during the search for lesions. Interacts with UvrC in an incision complex.

It is found in the cytoplasm. Functionally, the UvrABC repair system catalyzes the recognition and processing of DNA lesions. A damage recognition complex composed of 2 UvrA and 2 UvrB subunits scans DNA for abnormalities. Upon binding of the UvrA(2)B(2) complex to a putative damaged site, the DNA wraps around one UvrB monomer. DNA wrap is dependent on ATP binding by UvrB and probably causes local melting of the DNA helix, facilitating insertion of UvrB beta-hairpin between the DNA strands. Then UvrB probes one DNA strand for the presence of a lesion. If a lesion is found the UvrA subunits dissociate and the UvrB-DNA preincision complex is formed. This complex is subsequently bound by UvrC and the second UvrB is released. If no lesion is found, the DNA wraps around the other UvrB subunit that will check the other stand for damage. The polypeptide is UvrABC system protein B (Colwellia psychrerythraea (strain 34H / ATCC BAA-681) (Vibrio psychroerythus)).